Here is a 581-residue protein sequence, read N- to C-terminus: Adenine deaminase (581 aa).

The protein belongs to the metallo-dependent hydrolases superfamily. Adenine deaminase family. The cofactor is Mn(2+).

It catalyses the reaction adenine + H2O + H(+) = hypoxanthine + NH4(+). The sequence is that of Adenine deaminase from Clostridium botulinum (strain Eklund 17B / Type B).